Consider the following 344-residue polypeptide: L-rhamnose-proton symporter (344 aa).

10 helical membrane-spanning segments follow: residues 4–24 (AIILGIIWHLVGAASAACFYA), 38–58 (WSIGGLVSWLILPWTVSYLLL), 68–88 (FSIATLLPVFLFGAMWGIGNI), 101–121 (MGIGIAIGITLIIGTLMTPIL), 137–157 (TLLGVFVALIGVAIVSYAGLL), 175–195 (LILAVMCGIFSAGMSFAMDAA), 207–227 (INSLYVALPSYVIIMGGGAII), 259–279 (ILFSALAGLMWYLQFFFYAWG), 290–310 (MSWMLHMSFYVLCGGIVGLLL), and 321–341 (VAVLCIGCLVIILAANIVGLG).

This sequence belongs to the L-rhamnose transporter (TC 2.A.7.6) family.

Its subcellular location is the cell inner membrane. The catalysed reaction is L-rhamnopyranose(in) + H(+)(in) = L-rhamnopyranose(out) + H(+)(out). Uptake of L-rhamnose across the cytoplasmic membrane with the concomitant transport of protons into the cell (symport system). This chain is L-rhamnose-proton symporter, found in Yersinia pseudotuberculosis serotype O:1b (strain IP 31758).